Reading from the N-terminus, the 160-residue chain is Endoribonuclease YbeY (160 aa).

Positions 112, 116, and 122 each coordinate Zn(2+).

This sequence belongs to the endoribonuclease YbeY family. It depends on Zn(2+) as a cofactor.

The protein resides in the cytoplasm. In terms of biological role, single strand-specific metallo-endoribonuclease involved in late-stage 70S ribosome quality control and in maturation of the 3' terminus of the 16S rRNA. This Maricaulis maris (strain MCS10) (Caulobacter maris) protein is Endoribonuclease YbeY.